The following is a 407-amino-acid chain: MEIILGVVMFTLIVLALTVMILFAKSKLVNTGDITVEINEDEDKSFTAPAGDKLLNMLSSHGIFVSSACGGGGSCGQCRVTIKEGGGDILPTELSHISKREAKEGCRLACQVNVKQNLKIELPEEIFGVKKWTCEVISNDNKATFIKELKLKIPDGDVVPFRAGGFIQIEAEPHTVKYADFDVPTEYRGDWDKFNLFRFESVVTEPTVRAYSMANYPEEHGIILLNVRIATPPPSVPDAPPGIMSSYIWSLKPGDKVVISGPFGEFFAKDTDAEMVFIGGGAGMAPMRSHIFDQLKRLHSKRKISFWYGARSRREMFYEEDFDQLQAENDNFRWHVALSDPQPEDNWTGYTGFIHNVLLENYLKDHPAPEDCEFYMCGPPMMNAAVIKMLKDLGVEDENIMLDDFGG.

A helical membrane pass occupies residues 3–23 (IILGVVMFTLIVLALTVMILF). A 2Fe-2S ferredoxin-type domain is found at 32 to 126 (GDITVEINED…NLKIELPEEI (95 aa)). The [2Fe-2S] cluster site is built by C69, C75, C78, and C110. An FAD-binding FR-type domain is found at 129–269 (VKKWTCEVIS…SGPFGEFFAK (141 aa)).

It belongs to the NqrF family. As to quaternary structure, composed of six subunits; NqrA, NqrB, NqrC, NqrD, NqrE and NqrF. [2Fe-2S] cluster is required as a cofactor. The cofactor is FAD.

It localises to the cell inner membrane. The catalysed reaction is a ubiquinone + n Na(+)(in) + NADH + H(+) = a ubiquinol + n Na(+)(out) + NAD(+). Functionally, NQR complex catalyzes the reduction of ubiquinone-1 to ubiquinol by two successive reactions, coupled with the transport of Na(+) ions from the cytoplasm to the periplasm. The first step is catalyzed by NqrF, which accepts electrons from NADH and reduces ubiquinone-1 to ubisemiquinone by a one-electron transfer pathway. This is Na(+)-translocating NADH-quinone reductase subunit F from Yersinia pseudotuberculosis serotype O:1b (strain IP 31758).